The following is a 234-amino-acid chain: Probable GTP-binding protein EngB (234 aa).

Residues 23-209 enclose the EngB-type G domain; the sequence is AVPEVAFAGR…QRTVAGWLCL (187 aa). GTP contacts are provided by residues 31–38, 58–62, 82–85, 149–152, and 187–190; these read GRSNAGKS, GRTQH, DLPG, TKAD, and LFSS. Serine 38 and threonine 60 together coordinate Mg(2+). Residues 210–234 are disordered; the sequence is PEAMPPSPDAEPAKKTPSPDAQRGE.

This sequence belongs to the TRAFAC class TrmE-Era-EngA-EngB-Septin-like GTPase superfamily. EngB GTPase family. The cofactor is Mg(2+).

Its function is as follows. Necessary for normal cell division and for the maintenance of normal septation. The protein is Probable GTP-binding protein EngB of Ralstonia nicotianae (strain ATCC BAA-1114 / GMI1000) (Ralstonia solanacearum).